The sequence spans 53 residues: uncharacterized protein (53 aa).

The helical transmembrane segment at 4–24 (FILLIVGFIYGAGGVLLYSVY) threads the bilayer.

Its subcellular location is the host membrane. This is an uncharacterized protein from Acidianus bottle-shaped virus (isolate Italy/Pozzuoli) (ABV).